The following is a 393-amino-acid chain: GDP-4-keto-6-deoxy-D-mannose 3-dehydratase (393 aa).

30-33 (NMFT) contacts GDP-4-dehydro-alpha-D-rhamnose. The chain crosses the membrane as a helical span at residues 53-73 (YSVMVSSGSTANLLMIAALFF). Pyridoxal 5'-phosphate-binding positions include 60–61 (GS), tryptophan 92, glutamate 166, and serine 187. Histidine 192 functions as the Proton donor/acceptor in the catalytic mechanism. Histidine 219 contacts L-glutamate. Arginine 223 lines the GDP-4-dehydro-alpha-D-rhamnose pocket. Asparagine 252 lines the pyridoxal 5'-phosphate pocket. Arginine 254 is an L-glutamate binding site. Glutamate 333 contacts GDP-4-dehydro-alpha-D-rhamnose.

This sequence belongs to the DegT/DnrJ/EryC1 family. As to quaternary structure, homodimer. Pyridoxal 5'-phosphate serves as cofactor.

The protein localises to the cell membrane. It catalyses the reaction GDP-4-dehydro-alpha-D-rhamnose + L-glutamate = GDP-4-dehydro-3,6-dideoxy-alpha-D-mannose + 2-oxoglutarate + NH4(+). The protein operates within nucleotide-sugar metabolism; GDP-L-colitose biosynthesis. Involved in the biosynthesis of L-colitose, a 3,6-dideoxyhexose present in the O-antigen region of lipopolysaccharides (LPS), where it serves as an antigenic determinant and is vital for bacterial defense and survival. Catalyzes the removal of the C3'-hydroxyl group from GDP-4-keto-6-deoxy-D-mannose via a combined transamination-deoxygenation reaction. The catalysis is initiated by a transamination step in which pyridoxal 5'-phosphate (PLP) is converted to pyridoxamine 5'-phosphate (PMP) in the presence of L-glutamate. This coenzyme then forms a Schiff base with GDP-4-keto-6-deoxy-D-mannose and the resulting adduct undergoes a PMP-mediated beta-dehydration reaction to give a sugar enamine intermediate, which after tautomerization and hydrolysis to release ammonia yields GDP-4-keto-3,6-dideoxy-D-mannose as a product. This is GDP-4-keto-6-deoxy-D-mannose 3-dehydratase from Yersinia pseudotuberculosis.